We begin with the raw amino-acid sequence, 456 residues long: Dihydroorotase (456 aa).

Histidine 60 and histidine 62 together coordinate Zn(2+). Residues 62 to 64 and asparagine 94 contribute to the substrate site; that span reads HFR. Zn(2+) is bound by residues glutamate 146, histidine 180, histidine 234, and aspartate 313. Aspartate 313 is a catalytic residue. Residue histidine 317 participates in substrate binding.

It belongs to the metallo-dependent hydrolases superfamily. DHOase family. Class I DHOase subfamily. It depends on Zn(2+) as a cofactor.

The enzyme catalyses (S)-dihydroorotate + H2O = N-carbamoyl-L-aspartate + H(+). Its pathway is pyrimidine metabolism; UMP biosynthesis via de novo pathway; (S)-dihydroorotate from bicarbonate: step 3/3. In terms of biological role, catalyzes the reversible cyclization of carbamoyl aspartate to dihydroorotate. This Methanosarcina mazei (strain ATCC BAA-159 / DSM 3647 / Goe1 / Go1 / JCM 11833 / OCM 88) (Methanosarcina frisia) protein is Dihydroorotase.